The chain runs to 237 residues: Methylosome subunit pICln (237 aa).

S2 bears the N-acetylserine mark. S102, S144, S193, and S195 each carry phosphoserine. Residue T223 is modified to Phosphothreonine.

Belongs to the pICln (TC 1.A.47) family. Component of the methylosome, a 20S complex containing at least PRMT5/SKB1, WDR77/MEP50 and CLNS1A/pICln. May mediate SNRPD1 and SNRPD3 methylation. Forms a 6S pICln-Sm complex composed of CLNS1A/pICln, SNRPD1, SNRPD2, SNRPE, SNRPF and SNRPG; ring-like structure where CLNS1A/pICln mimics additional Sm proteins and which is unable to assemble into the core snRNP. Interacts with LSM10 and LSM11.

The protein resides in the cytoplasm. It localises to the cytosol. The protein localises to the nucleus. It is found in the cytoskeleton. Its function is as follows. Involved in both the assembly of spliceosomal snRNPs and the methylation of Sm proteins. Chaperone that regulates the assembly of spliceosomal U1, U2, U4 and U5 small nuclear ribonucleoproteins (snRNPs), the building blocks of the spliceosome, and thereby plays an important role in the splicing of cellular pre-mRNAs. Most spliceosomal snRNPs contain a common set of Sm proteins SNRPB, SNRPD1, SNRPD2, SNRPD3, SNRPE, SNRPF and SNRPG that assemble in a heptameric protein ring on the Sm site of the small nuclear RNA to form the core snRNP (Sm core). In the cytosol, the Sm proteins SNRPD1, SNRPD2, SNRPE, SNRPF and SNRPG are trapped in an inactive 6S pICln-Sm complex by the chaperone CLNS1A that controls the assembly of the core snRNP. Dissociation by the SMN complex of CLNS1A from the trapped Sm proteins and their transfer to an SMN-Sm complex triggers the assembly of core snRNPs and their transport to the nucleus. The sequence is that of Methylosome subunit pICln (CLNS1A) from Pongo abelii (Sumatran orangutan).